A 391-amino-acid chain; its full sequence is RNA-binding motif protein, X chromosome (391 aa).

N-acetylmethionine; in Heterogeneous nuclear ribonucleoprotein G; alternate is present on methionine 1. Valine 2 carries the post-translational modification N-acetylvaline; in Heterogeneous nuclear ribonucleoprotein G, N-terminally processed. The RRM domain maps to 8 to 86; sequence GKLFIGGLNT…KAIKVEQATK (79 aa). A Glycyl lysine isopeptide (Lys-Gly) (interchain with G-Cter in SUMO2) cross-link involves residue lysine 22. The residue at position 30 (lysine 30) is an N6-acetyllysine. Residues 61-80 are compositionally biased toward basic and acidic residues; it reads DAKDAARDMNGKSLDGKAIK. Residues 61–391 form a disordered region; it reads DAKDAARDMN…SDRGGGRSRY (331 aa). Glycyl lysine isopeptide (Lys-Gly) (interchain with G-Cter in SUMO2) cross-links involve residues lysine 80 and lysine 86. Serine 88 and serine 91 each carry phosphoserine. Residues 109–120 are compositionally biased toward gly residues; the sequence is LRGGRGGSGGTR. Arginine 125, arginine 144, and arginine 164 each carry omega-N-methylarginine. Residues 151-164 show a composition bias toward pro residues; that stretch reads RGPPPRSGGPPPKR. Serine 165 is subject to Phosphoserine. The residue at position 172 (arginine 172) is an Omega-N-methylarginine. At serine 174 the chain carries Phosphoserine. The segment at 186 to 236 is necessary for the association to nascent RNAPII transcripts and nuclear localization; the sequence is GRDSYGGPPRREPLPSRRDVYLSPRDDGYSTKDSYSSRDYPSSRDTRDYAP. 2 stretches are compositionally biased toward basic and acidic residues: residues 194 to 215 and 241 to 274; these read PRREPLPSRRDVYLSPRDDGYS and YTYRDYGHSSSRDDYPSRGYSDRDGYGRDRDYSD. 5 positions are modified to phosphoserine: serine 261, serine 328, serine 329, serine 330, and serine 332. Residues 323-337 are compositionally biased toward low complexity; sequence SRDSYSSSRSDLYSS. Positions 333-391 are necessary for RNA-binding; the sequence is DLYSSGRDRVGRQERGLPPSMERGYPPPRDSYSSSSRGAPRGGGRGGSRSDRGGGRSRY. Positions 338-347 are enriched in basic and acidic residues; the sequence is GRDRVGRQER. Serine 352 is modified (phosphoserine). A compositionally biased stretch (low complexity) spans 362 to 371; sequence DSYSSSSRGA. The span at 380–391 shows a compositional bias: basic and acidic residues; the sequence is SRSDRGGGRSRY.

As to quaternary structure, homomultimer. Found in the supraspliceosome complex. Identified in the spliceosome C complex. Forms a complex with ILF2, ILF3, YLPM1, KHDRBS1, NCOA5 and PPP1CA. Interacts with CLK2, KHDRBS2, KHDRBS3, SAFB/SAFB1, TRA2B and YTHDC1. Interacts with ERAP1; the interaction is RNA-independent. Interacts with PPIA/CYPA. Post-translationally, O-glycosylated. Arg-185 is dimethylated, probably to asymmetric dimethylarginine.

The protein resides in the nucleus. In terms of biological role, RNA-binding protein that plays several role in the regulation of pre- and post-transcriptional processes. Implicated in tissue-specific regulation of gene transcription and alternative splicing of several pre-mRNAs. Binds to and stimulates transcription from the tumor suppressor TXNIP gene promoter; may thus be involved in tumor suppression. When associated with SAFB, binds to and stimulates transcription from the SREBF1 promoter. Associates with nascent mRNAs transcribed by RNA polymerase II. Component of the supraspliceosome complex that regulates pre-mRNA alternative splice site selection. Can either activate or suppress exon inclusion; acts additively with TRA2B to promote exon 7 inclusion of the survival motor neuron SMN2. Represses the splicing of MAPT/Tau exon 10. Binds preferentially to single-stranded 5'-CC[A/C]-rich RNA sequence motifs localized in a single-stranded conformation; probably binds RNA as a homodimer. Binds non-specifically to pre-mRNAs. Also plays a role in the cytoplasmic TNFR1 trafficking pathways; promotes both the IL-1-beta-mediated inducible proteolytic cleavage of TNFR1 ectodomains and the release of TNFR1 exosome-like vesicles to the extracellular compartment. The sequence is that of RNA-binding motif protein, X chromosome (RBMX) from Pan troglodytes (Chimpanzee).